Here is a 257-residue protein sequence, read N- to C-terminus: 3-deoxy-manno-octulosonate cytidylyltransferase (257 aa).

Belongs to the KdsB family.

It localises to the cytoplasm. It catalyses the reaction 3-deoxy-alpha-D-manno-oct-2-ulosonate + CTP = CMP-3-deoxy-beta-D-manno-octulosonate + diphosphate. It functions in the pathway nucleotide-sugar biosynthesis; CMP-3-deoxy-D-manno-octulosonate biosynthesis; CMP-3-deoxy-D-manno-octulosonate from 3-deoxy-D-manno-octulosonate and CTP: step 1/1. The protein operates within bacterial outer membrane biogenesis; lipopolysaccharide biosynthesis. In terms of biological role, activates KDO (a required 8-carbon sugar) for incorporation into bacterial lipopolysaccharide in Gram-negative bacteria. The sequence is that of 3-deoxy-manno-octulosonate cytidylyltransferase from Xylella fastidiosa (strain 9a5c).